Here is a 164-residue protein sequence, read N- to C-terminus: Mediator of RNA polymerase II transcription subunit 21 (164 aa).

The tract at residues 49 to 81 (APLPANQTQQGSTLGSNRQTVSPSTQAEAESNF) is disordered. Residues 53–81 (ANQTQQGSTLGSNRQTVSPSTQAEAESNF) are compositionally biased toward polar residues. The stretch at 114–146 (ESQLKIIDDLSKELQSVEQEQVKKIQEKDKLLK) forms a coiled coil.

It belongs to the Mediator complex subunit 21 family. In terms of assembly, component of the Mediator complex.

Its subcellular location is the nucleus. Functionally, component of the Mediator complex, a coactivator involved in the regulated transcription of nearly all RNA polymerase II-dependent genes. Mediator functions as a bridge to convey information from gene-specific regulatory proteins to the basal RNA polymerase II transcription machinery. Mediator is recruited to promoters by direct interactions with regulatory proteins and serves as a scaffold for the assembly of a functional preinitiation complex with RNA polymerase II and the general transcription factors. The sequence is that of Mediator of RNA polymerase II transcription subunit 21 (SRB7) from Scheffersomyces stipitis (strain ATCC 58785 / CBS 6054 / NBRC 10063 / NRRL Y-11545) (Yeast).